The primary structure comprises 367 residues: Palmitoyltransferase ERF2 (367 aa).

Residues 1–23 show a composition bias toward polar residues; it reads MRLHSRQASNPHRQYSAAQSLHS. Positions 1–32 are disordered; sequence MRLHSRQASNPHRQYSAAQSLHSSSDDSEHKE. Residues 1-87 lie on the Cytoplasmic side of the membrane; sequence MRLHSRQASN…GRLRTVAKTK (87 aa). Residues 88–108 traverse the membrane as a helical segment; it reads YLSVLVLVMLIAPIVLFSVFE. Topologically, residues 109–121 are lumenal; it reads TGYLWKHVAGAKP. Residues 122–142 form a helical membrane-spanning segment; the sequence is CVVLCYYFWTLCFASFISTGA. Residues 143 to 229 lie on the Cytoplasmic side of the membrane; that stretch reads TDPGTLPRNI…NCIGQRNHRY (87 aa). Positions 185-235 constitute a DHHC domain; that stretch reads KYCTTCRIWRPPRASHCAVCDSCILSFDHHCDWLNNCIGQRNHRYFLAFLF. The S-palmitoyl cysteine intermediate role is filled by Cys-215. A helical transmembrane segment spans residues 230-250; sequence FLAFLFSSVLSSIWLLTCCAL. At 251-262 the chain is on the lumenal side; that stretch reads KLRHAGSPSAAP. Residues 263–283 form a helical membrane-spanning segment; sequence VSLLLICYCAVSIWYPLLLAI. Over 284–367 the chain is Cytoplasmic; sequence YHLFLTGTQQ…LPIPHSFEKV (84 aa).

The protein belongs to the DHHC palmitoyltransferase family. ERF2/ZDHHC9 subfamily. Interacts with ERF4. Post-translationally, autopalmitoylated.

It localises to the endoplasmic reticulum membrane. It carries out the reaction L-cysteinyl-[protein] + hexadecanoyl-CoA = S-hexadecanoyl-L-cysteinyl-[protein] + CoA. Its function is as follows. The ERF2-ERF4 complex is a palmitoyltransferase specific for Ras proteins. The chain is Palmitoyltransferase ERF2 (ERF2) from Eremothecium gossypii (strain ATCC 10895 / CBS 109.51 / FGSC 9923 / NRRL Y-1056) (Yeast).